Here is a 140-residue protein sequence, read N- to C-terminus: MPSSVQATAGLLATLMMFCGEVAMARSLLLAEPSQLAGQWQAVLSSPQDNAQTQAMQDKPSNSCLVELKVDQTLGGQTDCLGQWLGDEPVRWFTEPDGLSLIGKQDSRTHLGLRQGDHYQMTLKSGLILRLERNKSQSAH.

An N-terminal signal peptide occupies residues Met-1–Ala-25.

The protein belongs to the protease inhibitor I38 family.

The protein resides in the periplasm. Inhibitor of the alkaline protease. In Pseudomonas brassicacearum (strain NFM421), this protein is Alkaline proteinase inhibitor (inh).